A 248-amino-acid polypeptide reads, in one-letter code: Type III pantothenate kinase (248 aa).

8-15 (DAGNTRTK) contributes to the ATP binding site. Residues tyrosine 87 and 94–97 (GVDR) contribute to the substrate site. Aspartate 96 serves as the catalytic Proton acceptor. Threonine 119 provides a ligand contact to ATP. Position 173 (threonine 173) interacts with substrate.

The protein belongs to the type III pantothenate kinase family. Homodimer. Requires NH4(+) as cofactor. K(+) is required as a cofactor.

Its subcellular location is the cytoplasm. The enzyme catalyses (R)-pantothenate + ATP = (R)-4'-phosphopantothenate + ADP + H(+). It functions in the pathway cofactor biosynthesis; coenzyme A biosynthesis; CoA from (R)-pantothenate: step 1/5. Catalyzes the phosphorylation of pantothenate (Pan), the first step in CoA biosynthesis. This Methylobacillus flagellatus (strain ATCC 51484 / DSM 6875 / VKM B-1610 / KT) protein is Type III pantothenate kinase.